We begin with the raw amino-acid sequence, 114 residues long: uncharacterized protein (114 aa).

3 consecutive transmembrane segments (helical) span residues 21–41 (LASSLLISFSSFLFISSVCLF), 65–85 (GCFSSSFLSLSCLMSTLSALI), and 93–113 (LSVFTVVVSASLGSVFTILTD).

The protein resides in the membrane. This is an uncharacterized protein from Saccharomyces cerevisiae (strain ATCC 204508 / S288c) (Baker's yeast).